A 218-amino-acid polypeptide reads, in one-letter code: DNA replication complex GINS protein psf3 (218 aa).

The segment covering 147-163 (GGGSSYHGRDGGGAGGK) has biased composition (gly residues). The interval 147 to 182 (GGGSSYHGRDGGGAGGKGKGKATKDDNASNLGVGGA) is disordered.

The protein belongs to the GINS3/PSF3 family. In terms of assembly, component of the GINS complex which is a heterotetramer of div-26/sld5, drc-1/psf1, drc-2/psf2 and drc-3/psf3.

The protein localises to the nucleus. In terms of biological role, the GINS complex plays an essential role in the initiation of DNA replication. In Neurospora crassa (strain ATCC 24698 / 74-OR23-1A / CBS 708.71 / DSM 1257 / FGSC 987), this protein is DNA replication complex GINS protein psf3 (drc-3).